The primary structure comprises 126 residues: Anti-adapter protein IraD (126 aa).

Belongs to the GpW/Gp25 family. IraD subfamily. As to quaternary structure, interacts with RssB.

The protein localises to the cytoplasm. Inhibits RpoS proteolysis by regulating RssB activity, thereby increasing the stability of the sigma stress factor RpoS during oxidative stress. Its effect on RpoS stability is due to its interaction with RssB, which probably blocks the interaction of RssB with RpoS, and the consequent delivery of the RssB-RpoS complex to the ClpXP protein degradation pathway. The protein is Anti-adapter protein IraD of Salmonella arizonae (strain ATCC BAA-731 / CDC346-86 / RSK2980).